Here is a 250-residue protein sequence, read N- to C-terminus: Aminoglycoside 3'-phosphotransferase (250 aa).

Residue Asp-178 is the Proton acceptor of the active site.

The protein belongs to the aminoglycoside phosphotransferase family.

It carries out the reaction kanamycin A + ATP = kanamycin 3'-phosphate + ADP + H(+). In terms of biological role, resistance to kanamycin and structurally-related aminoglycosides, including amikacin. The polypeptide is Aminoglycoside 3'-phosphotransferase (aphA-7) (Campylobacter jejuni).